The sequence spans 242 residues: Ribonuclease PH (242 aa).

Phosphate is bound by residues R86 and 124-126; that span reads GTR.

It belongs to the RNase PH family. In terms of assembly, homohexameric ring arranged as a trimer of dimers.

The enzyme catalyses tRNA(n+1) + phosphate = tRNA(n) + a ribonucleoside 5'-diphosphate. Its function is as follows. Phosphorolytic 3'-5' exoribonuclease that plays an important role in tRNA 3'-end maturation. Removes nucleotide residues following the 3'-CCA terminus of tRNAs; can also add nucleotides to the ends of RNA molecules by using nucleoside diphosphates as substrates, but this may not be physiologically important. Probably plays a role in initiation of 16S rRNA degradation (leading to ribosome degradation) during starvation. The chain is Ribonuclease PH from Photorhabdus laumondii subsp. laumondii (strain DSM 15139 / CIP 105565 / TT01) (Photorhabdus luminescens subsp. laumondii).